A 307-amino-acid chain; its full sequence is UAP56-interacting factor (307 aa).

The span at 1 to 25 (MSGFGAAALLSGSSAAAGTRSGSSD) shows a compositional bias: low complexity. 2 disordered regions span residues 1-28 (MSGF…DSLE) and 41-85 (NKKE…KNHL). The UAP56-binding motif signature appears at 26 to 44 (SLEKIDMSLDDIIKLNKKE). Positions 57-78 (LQQNRTQQFRTPGSKWGIQQQK) are enriched in polar residues.

It belongs to the UIF family. Widely expressed.

Its subcellular location is the nucleus. It localises to the nucleoplasm. It is found in the nucleus speckle. Functionally, required for mRNA export from the nucleus to the cytoplasm. Acts as an adapter that uses the DDX39B/UAP56-NFX1 pathway to ensure efficient mRNA export and delivering to the nuclear pore. This is UAP56-interacting factor (FYTTD1) from Gallus gallus (Chicken).